A 182-amino-acid chain; its full sequence is Ribosome maturation factor RimP (182 aa).

This sequence belongs to the RimP family.

The protein resides in the cytoplasm. In terms of biological role, required for maturation of 30S ribosomal subunits. The sequence is that of Ribosome maturation factor RimP from Chloroherpeton thalassium (strain ATCC 35110 / GB-78).